The primary structure comprises 144 residues: Large ribosomal subunit protein uL16 (144 aa).

Basic residues predominate over residues 1 to 16 (MLIPKRVKYRKQHRPR). Residues 1–25 (MLIPKRVKYRKQHRPRGNGGVSKGG) are disordered.

It belongs to the universal ribosomal protein uL16 family. Part of the 50S ribosomal subunit.

Binds 23S rRNA and is also seen to make contacts with the A and possibly P site tRNAs. This Desulforamulus reducens (strain ATCC BAA-1160 / DSM 100696 / MI-1) (Desulfotomaculum reducens) protein is Large ribosomal subunit protein uL16.